The sequence spans 120 residues: Small ribosomal subunit protein bS16 (120 aa).

The disordered stretch occupies residues 84–120 (KRESRNNPQQGQPKKKAQERAAAAAAAAEKAASEAAA). Low complexity predominate over residues 103–120 (RAAAAAAAAEKAASEAAA).

It belongs to the bacterial ribosomal protein bS16 family.

The polypeptide is Small ribosomal subunit protein bS16 (Beijerinckia indica subsp. indica (strain ATCC 9039 / DSM 1715 / NCIMB 8712)).